Reading from the N-terminus, the 426-residue chain is Putative F-box/LRR-repeat protein At4g15060 (426 aa).

An F-box domain is found at 25–71; that stretch reads MDKISRLPDDLLVKVLLFLPTKIAVSTSILSKRWEFLWMWLPKLEYH. LRR repeat units follow at residues 50-75, 80-106, 160-187, 188-213, 221-259, 265-290, 311-337, 338-363, and 373-399; these read STSI…NTNY, EQRL…RLKF, ILKL…LLKR, VTYK…VVER, TLSI…KLTD, ETEL…HIDS, CVKV…KLCP, CDSN…EIKL, and DPAC…TWTW.

The sequence is that of Putative F-box/LRR-repeat protein At4g15060 from Arabidopsis thaliana (Mouse-ear cress).